The sequence spans 413 residues: Histidinol-phosphate aminotransferase, chloroplastic (413 aa).

Residues 1 to 35 (MGVIELCNTSSICIGRANPSCCSIERNQRRRIICM) constitute a chloroplast transit peptide. Lysine 273 is modified (N6-(pyridoxal phosphate)lysine).

It belongs to the class-II pyridoxal-phosphate-dependent aminotransferase family. Histidinol-phosphate aminotransferase subfamily. Homodimer. It depends on pyridoxal 5'-phosphate as a cofactor. In terms of tissue distribution, expressed in flowers, leaves, stems and roots.

The protein localises to the plastid. It localises to the chloroplast. The enzyme catalyses L-histidinol phosphate + 2-oxoglutarate = 3-(imidazol-4-yl)-2-oxopropyl phosphate + L-glutamate. It functions in the pathway amino-acid biosynthesis; L-histidine biosynthesis; L-histidine from 5-phospho-alpha-D-ribose 1-diphosphate: step 7/9. The polypeptide is Histidinol-phosphate aminotransferase, chloroplastic (HPA) (Nicotiana plumbaginifolia (Leadwort-leaved tobacco)).